The chain runs to 394 residues: MGMKHSSRCLLLRRKMAENAVESTEVSSAPPQPPQPVIPAKPVQCVHHVSTQPSCPGRGKMSKLLNPEEMTSRDYYFDSYAHFGIHEEMLKDEVRTLTYRNSMYHNKHVFKDKVVLDVGSGTGILSMFAAKAGAKKVFGIECSSISDYSEKIIKANHLDNVITIFKGKVEEVELPVEKVDIIISEWMGYCLFYESMLNTVIFARDKWLKPGGLMFPDRAALYVVAIEDRQYKDFKIHWWENVYGFDMTCIRDVAMKEPLVDIVDPKQVVTNACLIKEVDIYTVKTEELSFTSAFCLQIQRNDYVHALVTYFNIEFTKCHKKMGFSTAPDAPYTHWKQTVFYLEDYLTVRRGEEIYGTISMKPNAKNVRDLDFTVDLDFKGQLCETSVSNDYKMR.

Residue Gly-2 is the site of N-myristoyl glycine attachment. The segment at 21 to 40 is disordered; that stretch reads VESTEVSSAPPQPPQPVIPA. 2 short sequence motifs (SH3-binding) span residues 29-42 and 53-58; these read APPQ…PAKP and PSCPGR. Positions 30-39 are enriched in pro residues; that stretch reads PPQPPQPVIP. Arg-58 is subject to Omega-N-methylarginine; by PRMT8. An Asymmetric dimethylarginine; by PRMT8 modification is found at Arg-73. In terms of domain architecture, SAM-dependent MTase PRMT-type spans 73–394; that stretch reads RDYYFDSYAH…TSVSNDYKMR (322 aa). S-adenosyl-L-methionine contacts are provided by residues His-86, Arg-95, Gly-119, 119 to 122, Glu-141, and Glu-170; that span reads GSGT. Catalysis depends on residues Glu-185 and Glu-194.

Belongs to the class I-like SAM-binding methyltransferase superfamily. Protein arginine N-methyltransferase family. PRMT8 subfamily. Homodimer. Tetramer; individual homodimers associates to form a homotetramer. Homooctamer; individual homodimers associates to form a homooctamer and homooligomerization is required for proper localization to the cell membrane. Heterodimer with PRMT1; heterodimerization may recruit PRMT1 activity to the plasma membrane. Interacts with PRMT2 (via the SH3 domain). Interacts with FYN (via the SH3 domain). Interacts with EWS; independently of EWS methylation status. As to expression, brain-specific. Only expressed in neurons, especially in the somatosensory and limbic systems, and a part of motor system. Highly expressed in all of the regions related to general somatosensory system. Expressed in most of the relay nuclei intervening the special somatosensory system, such as the auditory, visual and vestibular systems. Also present in forebrain limbic areas and thalamic nuclei relevant to limbic areas and in areas related to the motor system, such as the caudate putamen, Purkinje cells, inferior olivary nucleus and cerebellar nuclei.

It is found in the cell membrane. It catalyses the reaction L-arginyl-[protein] + S-adenosyl-L-methionine = N(omega)-methyl-L-arginyl-[protein] + S-adenosyl-L-homocysteine + H(+). It carries out the reaction L-arginyl-[protein] + 2 S-adenosyl-L-methionine = N(omega),N(omega)-dimethyl-L-arginyl-[protein] + 2 S-adenosyl-L-homocysteine + 2 H(+). S-adenosyl-L-methionine-dependent and membrane-associated arginine methyltransferase that can both catalyze the formation of omega-N monomethylarginine (MMA) and asymmetrical dimethylarginine (aDMA) in proteins such as NIFK, myelin basic protein, histone H4, H2A and H2A/H2B dimer. Able to mono- and dimethylate EWS protein; however its precise role toward EWS remains unclear as it still interacts with fully methylated EWS. The chain is Protein arginine N-methyltransferase 8 from Mus musculus (Mouse).